Consider the following 264-residue polypeptide: S-adenosylmethionine decarboxylase proenzyme (264 aa).

The active-site Schiff-base intermediate with substrate; via pyruvic acid is the S112. The residue at position 112 (S112) is a Pyruvic acid (Ser); by autocatalysis. The active-site Proton acceptor; for processing activity is H117. The active-site Proton donor; for catalytic activity is the C140.

It belongs to the prokaryotic AdoMetDC family. Type 2 subfamily. Heterooctamer of four alpha and four beta chains arranged as a tetramer of alpha/beta heterodimers. Pyruvate serves as cofactor. Post-translationally, is synthesized initially as an inactive proenzyme. Formation of the active enzyme involves a self-maturation process in which the active site pyruvoyl group is generated from an internal serine residue via an autocatalytic post-translational modification. Two non-identical subunits are generated from the proenzyme in this reaction, and the pyruvate is formed at the N-terminus of the alpha chain, which is derived from the carboxyl end of the proenzyme. The post-translation cleavage follows an unusual pathway, termed non-hydrolytic serinolysis, in which the side chain hydroxyl group of the serine supplies its oxygen atom to form the C-terminus of the beta chain, while the remainder of the serine residue undergoes an oxidative deamination to produce ammonia and the pyruvoyl group blocking the N-terminus of the alpha chain.

It carries out the reaction S-adenosyl-L-methionine + H(+) = S-adenosyl 3-(methylsulfanyl)propylamine + CO2. It functions in the pathway amine and polyamine biosynthesis; S-adenosylmethioninamine biosynthesis; S-adenosylmethioninamine from S-adenosyl-L-methionine: step 1/1. Catalyzes the decarboxylation of S-adenosylmethionine to S-adenosylmethioninamine (dcAdoMet), the propylamine donor required for the synthesis of the polyamines spermine and spermidine from the diamine putrescine. In Escherichia coli O127:H6 (strain E2348/69 / EPEC), this protein is S-adenosylmethionine decarboxylase proenzyme.